The sequence spans 607 residues: UvrABC system protein C (607 aa).

In terms of domain architecture, GIY-YIG spans 16–94 (GRPGVYRMFD…IKEWRPPYNI (79 aa)). The region spanning 203-238 (NALSDELNASMEKAAMALDFERAAELRDQVALLRRV) is the UVR domain.

The protein belongs to the UvrC family. As to quaternary structure, interacts with UvrB in an incision complex.

The protein localises to the cytoplasm. Functionally, the UvrABC repair system catalyzes the recognition and processing of DNA lesions. UvrC both incises the 5' and 3' sides of the lesion. The N-terminal half is responsible for the 3' incision and the C-terminal half is responsible for the 5' incision. This chain is UvrABC system protein C, found in Pseudomonas syringae pv. tomato (strain ATCC BAA-871 / DC3000).